Reading from the N-terminus, the 94-residue chain is MKVKILRYHAIANWTWDTPKDDVCGICRVPFDGCCPQCTSPGDNCPIVWGKCKHIFHAHCIQNWLATSGSQGQCPMDRQTFVVADSTNEKSETQ.

The segment at 35–78 (CPQCTSPGDNCPIVWGKCKHIFHAHCIQNWLATSGSQGQCPMDR) adopts an RING-type zinc-finger fold.

The APC/C is composed of at least 13 subunits: apc1, apc2, nuc2, apc4, apc5, cut9, apc8, apc10, apc11, hcn1, apc13, apc14 and apc15.

Its function is as follows. Component of the anaphase-promoting complex/cyclosome (APC/C), a cell cycle-regulated E3 ubiquitin-protein ligase complex that controls progression through mitosis and the G1 phase of the cell cycle. The APC/C is thought to confer substrate specificity and, in the presence of ubiquitin-conjugating E2 enzymes, it catalyzes the formation of protein-ubiquitin conjugates that are subsequently degraded by the 26S proteasome. This is Anaphase-promoting complex subunit 11 (apc11) from Schizosaccharomyces pombe (strain 972 / ATCC 24843) (Fission yeast).